Consider the following 200-residue polypeptide: dITP/XTP pyrophosphatase (200 aa).

Serine 8–lysine 13 lines the substrate pocket. Residues glutamate 40 and aspartate 69 each coordinate Mg(2+). The active-site Proton acceptor is the aspartate 69. Residues serine 70, phenylalanine 154 to aspartate 157, lysine 177, and histidine 182 to arginine 183 contribute to the substrate site.

It belongs to the HAM1 NTPase family. In terms of assembly, homodimer. Mg(2+) is required as a cofactor.

It catalyses the reaction XTP + H2O = XMP + diphosphate + H(+). The catalysed reaction is dITP + H2O = dIMP + diphosphate + H(+). It carries out the reaction ITP + H2O = IMP + diphosphate + H(+). Pyrophosphatase that catalyzes the hydrolysis of nucleoside triphosphates to their monophosphate derivatives, with a high preference for the non-canonical purine nucleotides XTP (xanthosine triphosphate), dITP (deoxyinosine triphosphate) and ITP. Seems to function as a house-cleaning enzyme that removes non-canonical purine nucleotides from the nucleotide pool, thus preventing their incorporation into DNA/RNA and avoiding chromosomal lesions. This Coxiella burnetii (strain RSA 493 / Nine Mile phase I) protein is dITP/XTP pyrophosphatase.